The following is a 68-amino-acid chain: Small ribosomal subunit protein bS21 (68 aa).

The protein belongs to the bacterial ribosomal protein bS21 family.

The chain is Small ribosomal subunit protein bS21 from Dinoroseobacter shibae (strain DSM 16493 / NCIMB 14021 / DFL 12).